Consider the following 130-residue polypeptide: Sec-independent protein translocase protein TatB (130 aa).

The helical transmembrane segment at 2–22 (FANIGWGEMLVLVVVGLVVLG) threads the bilayer. Residues 108–130 (DAVASAQEAPDEPVRPPFDSDAT) are disordered.

It belongs to the TatB family. The Tat system comprises two distinct complexes: a TatABC complex, containing multiple copies of TatA, TatB and TatC subunits, and a separate TatA complex, containing only TatA subunits. Substrates initially bind to the TatABC complex, which probably triggers association of the separate TatA complex to form the active translocon.

It is found in the cell membrane. In terms of biological role, part of the twin-arginine translocation (Tat) system that transports large folded proteins containing a characteristic twin-arginine motif in their signal peptide across membranes. Together with TatC, TatB is part of a receptor directly interacting with Tat signal peptides. TatB may form an oligomeric binding site that transiently accommodates folded Tat precursor proteins before their translocation. This Mycobacterium ulcerans (strain Agy99) protein is Sec-independent protein translocase protein TatB.